The following is a 515-amino-acid chain: 2,3-bisphosphoglycerate-independent phosphoglycerate mutase (515 aa).

Mn(2+) contacts are provided by Asp-14 and Ser-64. Residue Ser-64 is the Phosphoserine intermediate of the active site. Residues His-125, 155 to 156 (RD), Arg-187, Arg-193, 263 to 266 (RADR), and Lys-337 contribute to the substrate site. The Mn(2+) site is built by Asp-404, His-408, Asp-445, His-446, and His-464.

The protein belongs to the BPG-independent phosphoglycerate mutase family. As to quaternary structure, monomer. The cofactor is Mn(2+).

The catalysed reaction is (2R)-2-phosphoglycerate = (2R)-3-phosphoglycerate. It participates in carbohydrate degradation; glycolysis; pyruvate from D-glyceraldehyde 3-phosphate: step 3/5. Functionally, catalyzes the interconversion of 2-phosphoglycerate and 3-phosphoglycerate. The sequence is that of 2,3-bisphosphoglycerate-independent phosphoglycerate mutase from Pseudomonas aeruginosa (strain UCBPP-PA14).